The primary structure comprises 123 residues: Nitrogen fixation nifHD1 region GlnB-like protein 2 (123 aa).

This sequence belongs to the P(II) protein family.

In terms of biological role, could be involved in the regulation of nitrogen fixation. The chain is Nitrogen fixation nifHD1 region GlnB-like protein 2 (glnBB) from Methanosarcina barkeri.